The primary structure comprises 114 residues: Large ribosomal subunit protein bL19 (114 aa).

It belongs to the bacterial ribosomal protein bL19 family.

In terms of biological role, this protein is located at the 30S-50S ribosomal subunit interface and may play a role in the structure and function of the aminoacyl-tRNA binding site. This Clostridium botulinum (strain ATCC 19397 / Type A) protein is Large ribosomal subunit protein bL19.